Reading from the N-terminus, the 401-residue chain is Probable trafficking protein particle complex subunit 13 homolog (401 aa).

It belongs to the TRAPPC13 family.

This Caenorhabditis elegans protein is Probable trafficking protein particle complex subunit 13 homolog.